The following is a 121-amino-acid chain: Small ribosomal subunit protein uS13 (121 aa).

Positions 93-121 (RGLPMRGQRTRTNARTRKGPRKSAAALKK) are disordered.

Belongs to the universal ribosomal protein uS13 family. Part of the 30S ribosomal subunit. Forms a loose heterodimer with protein S19. Forms two bridges to the 50S subunit in the 70S ribosome.

Its function is as follows. Located at the top of the head of the 30S subunit, it contacts several helices of the 16S rRNA. In the 70S ribosome it contacts the 23S rRNA (bridge B1a) and protein L5 of the 50S subunit (bridge B1b), connecting the 2 subunits; these bridges are implicated in subunit movement. Contacts the tRNAs in the A and P-sites. The protein is Small ribosomal subunit protein uS13 of Methylibium petroleiphilum (strain ATCC BAA-1232 / LMG 22953 / PM1).